A 308-amino-acid polypeptide reads, in one-letter code: Ornithine carbamoyltransferase (308 aa).

Carbamoyl phosphate contacts are provided by residues 51–54 (STRT), Gln-78, Arg-102, and 129–132 (HPTQ). Residues Asn-160, Asp-224, and 228 to 229 (SM) contribute to the L-ornithine site. Residues 264–265 (CL) and Arg-292 contribute to the carbamoyl phosphate site.

It belongs to the aspartate/ornithine carbamoyltransferase superfamily. OTCase family.

Its subcellular location is the cytoplasm. The enzyme catalyses carbamoyl phosphate + L-ornithine = L-citrulline + phosphate + H(+). It functions in the pathway amino-acid biosynthesis; L-arginine biosynthesis; L-arginine from L-ornithine and carbamoyl phosphate: step 1/3. Reversibly catalyzes the transfer of the carbamoyl group from carbamoyl phosphate (CP) to the N(epsilon) atom of ornithine (ORN) to produce L-citrulline. The protein is Ornithine carbamoyltransferase of Caldicellulosiruptor saccharolyticus (strain ATCC 43494 / DSM 8903 / Tp8T 6331).